The primary structure comprises 344 residues: 5,10-methenyltetrahydromethanopterin hydrogenase (344 aa).

It belongs to the HMD family. As to quaternary structure, homotetramer.

The enzyme catalyses 5,10-methenyl-5,6,7,8-tetrahydromethanopterin + H2 = 5,10-methylenetetrahydromethanopterin + H(+). It functions in the pathway one-carbon metabolism; methanogenesis from CO(2); 5,10-methylene-5,6,7,8-tetrahydromethanopterin from 5,10-methenyl-5,6,7,8-tetrahydromethanopterin (hydrogen route): step 1/1. Its activity is regulated as follows. Activity requires salt; 100 mM sodium or potassium salts of chloride, phosphate or sulfate are equally effective. Inactivated by O(2). Its function is as follows. Catalyzes the reversible reduction of methenyl-H(4)MPT(+) to methylene-H(4)MPT. The chain is 5,10-methenyltetrahydromethanopterin hydrogenase from Methanothermobacter marburgensis (strain ATCC BAA-927 / DSM 2133 / JCM 14651 / NBRC 100331 / OCM 82 / Marburg) (Methanobacterium thermoautotrophicum).